The primary structure comprises 804 residues: Leucine--tRNA ligase (804 aa).

The 'HIGH' region signature appears at 39–50; sequence PYPSGKGLHVGH. Residues 573–577 carry the 'KMSKS' region motif; it reads KMSKS. Lys-576 contributes to the ATP binding site.

It belongs to the class-I aminoacyl-tRNA synthetase family.

It localises to the cytoplasm. It catalyses the reaction tRNA(Leu) + L-leucine + ATP = L-leucyl-tRNA(Leu) + AMP + diphosphate. This is Leucine--tRNA ligase from Lactobacillus delbrueckii subsp. bulgaricus (strain ATCC 11842 / DSM 20081 / BCRC 10696 / JCM 1002 / NBRC 13953 / NCIMB 11778 / NCTC 12712 / WDCM 00102 / Lb 14).